The following is an 820-amino-acid chain: Penicillin-binding protein 1A (820 aa).

Residues 1–120 (MNSDGRHHQS…PAGRLPQPRV (120 aa)) form a disordered region. A compositionally biased stretch (basic and acidic residues) spans 41 to 53 (TDDRSAPHADSIE). The helical transmembrane segment at 139–159 (LTAAVVILLPMVTFTMAYLIV) threads the bilayer. A transglycosylase region spans residues 180 to 360 (GSEIAKIVPP…RWNWVLDGMV (181 aa)). The active-site Proton donor; for transglycosylase activity is Glu213. The segment at 453–743 (AVVSIDPHNG…PSDIWKATMD (291 aa)) is transpeptidase. Ser487 (acyl-ester intermediate; for transpeptidase activity) is an active-site residue. The segment covering 792–804 (ITIPIGPPTTITL) has biased composition (low complexity). Positions 792–820 (ITIPIGPPTTITLAPPPPAPPAATPTPPP) are disordered. Pro residues predominate over residues 805-820 (APPPPAPPAATPTPPP).

This sequence in the N-terminal section; belongs to the glycosyltransferase 51 family. It in the C-terminal section; belongs to the transpeptidase family. Interacts with RipA via its transpeptidase domain (residues 561-820).

The protein resides in the cell membrane. The enzyme catalyses [GlcNAc-(1-&gt;4)-Mur2Ac(oyl-L-Ala-gamma-D-Glu-L-Lys-D-Ala-D-Ala)](n)-di-trans,octa-cis-undecaprenyl diphosphate + beta-D-GlcNAc-(1-&gt;4)-Mur2Ac(oyl-L-Ala-gamma-D-Glu-L-Lys-D-Ala-D-Ala)-di-trans,octa-cis-undecaprenyl diphosphate = [GlcNAc-(1-&gt;4)-Mur2Ac(oyl-L-Ala-gamma-D-Glu-L-Lys-D-Ala-D-Ala)](n+1)-di-trans,octa-cis-undecaprenyl diphosphate + di-trans,octa-cis-undecaprenyl diphosphate + H(+). It catalyses the reaction Preferential cleavage: (Ac)2-L-Lys-D-Ala-|-D-Ala. Also transpeptidation of peptidyl-alanyl moieties that are N-acyl substituents of D-alanine.. The protein operates within cell wall biogenesis; peptidoglycan biosynthesis. Functionally, cell wall formation. Synthesis of cross-linked peptidoglycan from the lipid intermediates. The enzyme has a penicillin-insensitive transglycosylase N-terminal domain (formation of linear glycan strands) and a penicillin-sensitive transpeptidase C-terminal domain (cross-linking of the peptide subunits). Has little peptidoglycan hydrolytic activity; however it inhibits the synergistic peptidoglycan hydrolysis of RipA plus RpfB. This chain is Penicillin-binding protein 1A (ponA1), found in Mycobacterium tuberculosis (strain ATCC 25618 / H37Rv).